A 333-amino-acid polypeptide reads, in one-letter code: Terminal uridylyltransferase 4 (333 aa).

UTP contacts are provided by residues serine 54 and 65–68; that span reads SDVD. Residues aspartate 66 and aspartate 68 each contribute to the Mg(2+) site. Arginine 121 is an RNA binding site. Residues 144 to 148, lysine 169, lysine 173, and 188 to 189 contribute to the UTP site; these read GVRNS and SY. One can recognise a PAP-associated domain in the interval 237-302; sequence LGTQVLDFLH…WCIEDPYELN (66 aa).

The protein belongs to the DNA polymerase type-B-like family. In terms of assembly, monomer. The cofactor is Mg(2+). Mn(2+) is required as a cofactor.

It catalyses the reaction RNA(n) + UTP = RNA(n)-3'-uridine ribonucleotide + diphosphate. With respect to regulation, the 3' uridylated RNA substrate is involved in the selective incorporation of UTP; UTP binding is favored due to the constraint posed on the positioning of the NTP base by the continuous stacking interactions between Tyr-189 side chain, the bound NTP, and the terminal nucleoside base of the RNA substrate. Functionally, terminal uridylyltransferase which, specifically, catalyzes the addition of Us to the 3'-hydroxyl group of single-stranded RNAs with a 3'-terminal U. This chain is Terminal uridylyltransferase 4, found in Trypanosoma brucei brucei (strain 927/4 GUTat10.1).